Here is a 450-residue protein sequence, read N- to C-terminus: Calcium-binding and coiled-coil domain-containing protein 2 (450 aa).

The CLIR motif lies at 133 to 136; that stretch reads ILVV. The stretch at 135-349 forms a coiled coil; that stretch reads VVTTQSEVEE…RENNRLLSYM (215 aa). An LIR-like motif is present at residues 203–206; the sequence is DCWE. Positions 371-381 are interaction with LGALS8; the sequence is DPGLVFGNPYS. The segment at 395-450 is interaction with MYO6; it reads KKCPTCKSDFAADVFDHNLALEQHLQTLSLNCPICDKTFPAKEKQIFEDHVFCHTL. Residues 423–448 form a UBZ1-type zinc finger; that stretch reads SLNCPICDKTFPAKEKQIFEDHVFCH. Positions 426, 429, 444, and 448 each coordinate Zn(2+).

The protein belongs to the CALCOCO family. In terms of assembly, dimer. Part of a complex consisting of CALCOCO2, TAX1BP1 and MYO6. Interacts with GEMIN4. Interacts with ATG8 family members MAP1LC3A, MAP1LC3B, GABARAP, GABARAPL1 and GABARAPL2. Interacts with ATG8 family member MAP1LC3C. Interacts with LGALS8. Interacts with TOM1; the interaction is indirect and is mediated by MYO6, which acts as a bridge between TOM1 and CALCOCO2. Interacts with AZI2.

The protein resides in the cytoplasm. Its subcellular location is the perinuclear region. It localises to the cytoskeleton. It is found in the cytoplasmic vesicle. The protein localises to the autophagosome membrane. Functionally, xenophagy-specific receptor required for autophagy-mediated intracellular bacteria degradation. Acts as an effector protein of galectin-sensed membrane damage that restricts the proliferation of infecting pathogens upon entry into the cytosol by targeting LGALS8-associated bacteria for autophagy. Initially orchestrates bacteria targeting to autophagosomes and subsequently ensures pathogen degradation by regulating pathogen-containing autophagosome maturation. Bacteria targeting to autophagosomes relies on its interaction with MAP1LC3A, MAP1LC3B and/or GABARAPL2, whereas regulation of pathogen-containing autophagosome maturation requires the interaction with MAP3LC3C. May play a role in ruffle formation and actin cytoskeleton organization and seems to negatively regulate constitutive secretion. In Bos taurus (Bovine), this protein is Calcium-binding and coiled-coil domain-containing protein 2.